The chain runs to 144 residues: MASTRVLASRLASQMATKVARPAVRVPARAFTAGTKATPLQAVKRQQMSSIITATRQITQKRAYSSEIAQAMVEVSKNLGMGTAAIGLTGAGIGIGLVFAALLNGVARNPALRGQLFSYAILGFAFVEAIGLFDLMVALMAKFT.

The transit peptide at 1-63 directs the protein to the mitochondrion; it reads MASTRVLASR…ATRQITQKRA (63 aa). Transmembrane regions (helical) follow at residues 83 to 103 and 120 to 140; these read TAAIGLTGAGIGIGLVFAALL and AILGFAFVEAIGLFDLMVALM.

It belongs to the ATPase C chain family. In terms of assembly, F-type ATPases have 2 components, CF(1) - the catalytic core - and CF(0) - the membrane proton channel. CF(1) has five subunits: alpha(3), beta(3), gamma(1), delta(1), epsilon(1). CF(0) has three main subunits: a, b and c.

It is found in the mitochondrion membrane. Functionally, mitochondrial membrane ATP synthase (F(1)F(0) ATP synthase or Complex V) produces ATP from ADP in the presence of a proton gradient across the membrane which is generated by electron transport complexes of the respiratory chain. F-type ATPases consist of two structural domains, F(1) - containing the extramembraneous catalytic core and F(0) - containing the membrane proton channel, linked together by a central stalk and a peripheral stalk. During catalysis, ATP synthesis in the catalytic domain of F(1) is coupled via a rotary mechanism of the central stalk subunits to proton translocation. Part of the complex F(0) domain. A homomeric c-ring of probably 10 subunits is part of the complex rotary element. The chain is ATP synthase subunit 9, mitochondrial (ATP9) from Podospora anserina (Pleurage anserina).